The following is a 147-amino-acid chain: Hemoglobin subunit epsilon (147 aa).

The Globin domain occupies 3–147 (HFTAEEKSTI…VATALAHKYH (145 aa)). Phosphoserine occurs at positions 14 and 51. Heme b-binding residues include histidine 64 and histidine 93.

It belongs to the globin family. In terms of assembly, heterotetramer of two alpha chains and two epsilon chains in early embryonic hemoglobin Gower-2; two zeta chains and two epsilon chains in early embryonic hemoglobin Gower-1. As to expression, red blood cells.

Its function is as follows. The epsilon chain is a beta-type chain of early mammalian embryonic hemoglobin. This chain is Hemoglobin subunit epsilon (HBE1), found in Eulemur fulvus fulvus (Brown lemur).